A 316-amino-acid chain; its full sequence is Delta(1)-pyrroline-2-carboxylate reductase (316 aa).

This sequence belongs to the ornithine cyclodeaminase/mu-crystallin family.

The enzyme catalyses L-proline + NAD(+) = 1-pyrroline-2-carboxylate + NADH + H(+). It carries out the reaction L-proline + NADP(+) = 1-pyrroline-2-carboxylate + NADPH + H(+). Catalyzes the reduction of Delta(1)-pyrroline-2-carboxylate (Pyr2C) to L-proline, using preferentially NADPH over NADH as the electron donor. Is likely involved in a degradation pathway that converts trans-3-hydroxy-L-proline (t3LHyp) to L-proline, which would allow P.denitrificans to grow on t3LHyp as a sole carbon source. This is Delta(1)-pyrroline-2-carboxylate reductase from Paracoccus denitrificans (strain Pd 1222).